Here is a 282-residue protein sequence, read N- to C-terminus: NADPH-dependent 7-cyano-7-deazaguanine reductase (282 aa).

88 to 90 (IES) is a substrate binding site. 90 to 91 (SK) contributes to the NADPH binding site. The Thioimide intermediate role is filled by Cys190. The Proton donor role is filled by Asp197. Residue 229–230 (HE) participates in substrate binding. Residue 258-259 (RG) coordinates NADPH.

Belongs to the GTP cyclohydrolase I family. QueF type 2 subfamily. As to quaternary structure, homodimer.

It localises to the cytoplasm. It catalyses the reaction 7-aminomethyl-7-carbaguanine + 2 NADP(+) = 7-cyano-7-deazaguanine + 2 NADPH + 3 H(+). The protein operates within tRNA modification; tRNA-queuosine biosynthesis. In terms of biological role, catalyzes the NADPH-dependent reduction of 7-cyano-7-deazaguanine (preQ0) to 7-aminomethyl-7-deazaguanine (preQ1). The polypeptide is NADPH-dependent 7-cyano-7-deazaguanine reductase (Escherichia coli O45:K1 (strain S88 / ExPEC)).